The primary structure comprises 107 residues: Large ribosomal subunit protein P2 (107 aa).

A disordered region spans residues 86–107 (PAAAAAEAEEEDDDDMGFGLFD). A compositionally biased stretch (acidic residues) spans 92-101 (EAEEEDDDDM).

Belongs to the eukaryotic ribosomal protein P1/P2 family. As to quaternary structure, P1 and P2 exist as dimers at the large ribosomal subunit. Post-translationally, phosphorylated.

Its function is as follows. Plays an important role in the elongation step of protein synthesis. The chain is Large ribosomal subunit protein P2 from Trypanosoma brucei brucei.